The primary structure comprises 147 residues: Basic phospholipase A2 beta-bungarotoxin A1 chain (147 aa).

The signal sequence occupies residues 1–19; the sequence is MNPAHLLVLSAVCVSLLGA. Positions 20 to 27 are excised as a propeptide; the sequence is ANIPPHPL. Disulfide bonds link Cys-54–Cys-146, Cys-56–Cys-72, Cys-71–Cys-127, Cys-78–Cys-120, Cys-88–Cys-113, and Cys-106–Cys-118. Ca(2+) is bound by residues Tyr-55, Gly-57, and Gly-59. Residue His-75 is part of the active site. Asp-76 provides a ligand contact to Ca(2+). Asp-121 is an active-site residue.

Belongs to the phospholipase A2 family. Group I subfamily. D49 sub-subfamily. In terms of assembly, heterodimer; disulfide-linked. The A chains have phospholipase A2 activity and the B chains show homology with the basic protease inhibitors. The A1 chain is found in beta-1 and beta-2 bungarotoxins. Requires Ca(2+) as cofactor. In terms of tissue distribution, expressed by the venom gland.

The protein localises to the secreted. It catalyses the reaction a 1,2-diacyl-sn-glycero-3-phosphocholine + H2O = a 1-acyl-sn-glycero-3-phosphocholine + a fatty acid + H(+). Functionally, snake venom phospholipase A2 (PLA2) that inhibits neuromuscular transmission by blocking acetylcholine release from the nerve termini. PLA2 catalyzes the calcium-dependent hydrolysis of the 2-acyl groups in 3-sn-phosphoglycerides. This chain is Basic phospholipase A2 beta-bungarotoxin A1 chain, found in Bungarus multicinctus (Many-banded krait).